Here is a 163-residue protein sequence, read N- to C-terminus: Nucleotide-binding protein NTHI1194 (163 aa).

It belongs to the YajQ family.

Nucleotide-binding protein. This Haemophilus influenzae (strain 86-028NP) protein is Nucleotide-binding protein NTHI1194.